A 238-amino-acid polypeptide reads, in one-letter code: Urease subunit alpha (238 aa).

Residues 1–102 (MKLTPKELDK…LVTVHTPIES (102 aa)) are urease gamma. Residues 103-238 (KGKLVPGELF…DDNYVKTIKE (136 aa)) are urease beta.

The protein in the N-terminal section; belongs to the urease gamma subunit family. In the C-terminal section; belongs to the urease beta subunit family. As to quaternary structure, heterohexamer of 3 UreA (alpha) and 3 UreB (beta) subunits.

It localises to the cytoplasm. The catalysed reaction is urea + 2 H2O + H(+) = hydrogencarbonate + 2 NH4(+). It participates in nitrogen metabolism; urea degradation; CO(2) and NH(3) from urea (urease route): step 1/1. This Helicobacter acinonychis (strain Sheeba) protein is Urease subunit alpha.